Consider the following 124-residue polypeptide: uncharacterized protein (124 aa).

The region spanning 42 to 118 is the GIY-YIG domain; sequence DKGGIFMFYN…INTQHSKYNI (77 aa).

This is an uncharacterized protein from Bacillus subtilis (strain 168).